The sequence spans 33 residues: Rhinophrynin-33 (33 aa).

In terms of tissue distribution, expressed by the skin glands.

Its subcellular location is the secreted. Functionally, non-cytotoxic peptide with immunosuppressive and insulinotropic effects. Induces an increased production of the anti-inflammatory cytokine IL-10 and inhibits production of the pro-inflammatory cytokines TNF-alpha and IL-1beta, when incubated with mouse peritoneal cells. Does not display growth-inhibitory activity against the Gram-positive S.epidermidis and Gram-negative E.coli bacteria and against the opportunistic yeast pathogen C.parapsilosis (MIC&gt;128 uM). In addition, it lacks cytotoxic activity against mouse erythrocytes (LC(50)&gt;500 uM) and A549 human non-small cell lung adenocarcinoma cells (LC(50)&gt;100 uM). Moderately stimulates insulin release from rat clonal beta-cells and mouse pancreatic islets. Non-cytotoxic peptide with immunosuppressive but without insulinotropic effects. Inhibits production of the pro-inflammatory cytokines TNF-alpha, but has no effect on IL-10 and IL-1beta production, when incubated with mouse peritoneal cells. Has no activity of stimulation of insulin release. This is Rhinophrynin-33 from Rhinophrynus dorsalis (Mexican burrowing toad).